A 479-amino-acid polypeptide reads, in one-letter code: Glucagon receptor (479 aa).

The first 25 residues, 1–25, serve as a signal peptide directing secretion; it reads MPPARLRHPHLLLLLLLACQPQAPA. Over 26–136 the chain is Extracellular; sequence AQAMDFLFQK…ELGVQREVAE (111 aa). 3 disulfide bridges follow: Cys43–Cys67, Cys58–Cys100, and Cys81–Cys121. 5 N-linked (GlcNAc...) asparagine glycosylation sites follow: Asn46, Asn59, Asn74, Asn78, and Asn117. Residues 137–161 form a helical membrane-spanning segment; it reads MYSSFQAMYTAGYSLSLAALLLALA. At 162–173 the chain is on the cytoplasmic side; that stretch reads ILLGLSKLHCTR. The chain crosses the membrane as a helical span at residues 174 to 198; that stretch reads NYIHANLLASFVLRASSVLALDALL. Over 199 to 225 the chain is Extracellular; that stretch reads KTRYSQRLGDDLSVSIWLSDEAVAGCR. Cysteines 224 and 294 form a disulfide. Residues 226–249 form a helical membrane-spanning segment; the sequence is VAAVFMQYGVVANYCWLLVEGVYL. Over 250-263 the chain is Cytoplasmic; it reads HSLLRQATIPERSC. The helical transmembrane segment at 264–285 threads the bilayer; that stretch reads FPLYLAIGWGAPMLFVIPWAVV. Residues 286–303 lie on the Extracellular side of the membrane; that stretch reads KCLFENIQCWTSNDNMGF. Residues 304 to 326 traverse the membrane as a helical segment; the sequence is WWILRFPVFLAILINFSIFIRVL. Residues 327-350 are Cytoplasmic-facing; that stretch reads HVLVAKLRAHQMRCTDYKFRLARS. The chain crosses the membrane as a helical span at residues 351-369; the sequence is TLTLIPLLGVHEVVFAFVT. Residues 370 to 381 lie on the Extracellular side of the membrane; it reads DEHAQGALRSAK. Residues 382-402 traverse the membrane as a helical segment; that stretch reads LFFDLFLSSFQGLLVAVLYCF. Over 403–479 the chain is Cytoplasmic; that stretch reads LNKEVQAELL…GLPGVAENPF (77 aa). The interval 426-479 is disordered; the sequence is KAHRVGSHSARPPSGPPSEKLLLSTGGSSNGTSQEPSAETHLASGLPGVAENPF. Positions 446-458 are enriched in low complexity; that stretch reads LLLSTGGSSNGTS. A Phosphoserine modification is found at Ser458.

This sequence belongs to the G-protein coupled receptor 2 family. In terms of processing, ligand-binding promotes phosphorylation of serine residues in the C-terminal cytoplasmic domain. Phosphorylation is important for receptor endocytosis after ligand-binding.

It is found in the cell membrane. Functionally, G-protein coupled receptor for glucagon that plays a central role in the regulation of blood glucose levels and glucose homeostasis. Regulates the rate of hepatic glucose production by promoting glycogen hydrolysis and gluconeogenesis. Plays an important role in mediating the responses to fasting. Ligand binding causes a conformation change that triggers signaling via guanine nucleotide-binding proteins (G proteins) and modulates the activity of down-stream effectors, such as adenylate cyclase. Promotes activation of adenylate cyclase. Besides, plays a role in signaling via a phosphatidylinositol-calcium second messenger system. The chain is Glucagon receptor from Sus scrofa (Pig).